A 530-amino-acid chain; its full sequence is Berberine bridge enzyme-like 4 (530 aa).

The signal sequence occupies residues 1–19 (MKGTLSVLCLVLLVSVLEA). Cys32 and Cys95 are disulfide-bonded. An N-linked (GlcNAc...) asparagine glycan is attached at Asn52. The region spanning 73-247 (NYRKLLAIVA…LSWKINLVDV (175 aa)) is the FAD-binding PCMH-type domain. A cross-link (6-(S-cysteinyl)-8alpha-(pros-histidyl)-FAD (His-Cys)) is located at residues 110–172 (HDYEGLSYMS…QTLAFPAGVC (63 aa)). N-linked (GlcNAc...) asparagine glycans are attached at residues Asn257, Asn292, Asn341, and Asn441.

This sequence belongs to the oxygen-dependent FAD-linked oxidoreductase family. It depends on FAD as a cofactor. In terms of processing, the FAD cofactor is bound via a bicovalent 6-S-cysteinyl, 8alpha-N1-histidyl FAD linkage.

The protein resides in the secreted. Its subcellular location is the cell wall. Its function is as follows. Probable flavin-dependent oxidoreductase. The protein is Berberine bridge enzyme-like 4 of Arabidopsis thaliana (Mouse-ear cress).